We begin with the raw amino-acid sequence, 218 residues long: Probable GTP-binding protein EngB (218 aa).

Residues 31–205 (SGIEIAFAGR…EQKVTSWYAQ (175 aa)) enclose the EngB-type G domain. Residues 39–46 (GRSNAGKS), 66–70 (GRTQL), 84–87 (DLPG), 151–154 (TKAD), and 184–186 (FSS) each bind GTP. S46 and T68 together coordinate Mg(2+).

This sequence belongs to the TRAFAC class TrmE-Era-EngA-EngB-Septin-like GTPase superfamily. EngB GTPase family. Requires Mg(2+) as cofactor.

Functionally, necessary for normal cell division and for the maintenance of normal septation. In Psychromonas ingrahamii (strain DSM 17664 / CCUG 51855 / 37), this protein is Probable GTP-binding protein EngB.